A 287-amino-acid polypeptide reads, in one-letter code: Elongation factor Ts (287 aa).

Residues 80 to 83 (TDFL) are involved in Mg(2+) ion dislocation from EF-Tu.

This sequence belongs to the EF-Ts family.

The protein localises to the cytoplasm. In terms of biological role, associates with the EF-Tu.GDP complex and induces the exchange of GDP to GTP. It remains bound to the aminoacyl-tRNA.EF-Tu.GTP complex up to the GTP hydrolysis stage on the ribosome. The protein is Elongation factor Ts of Pseudomonas fluorescens (strain SBW25).